Consider the following 272-residue polypeptide: Dermonecrotic toxin SpeSicTox-betaIB2b (272 aa).

The active site involves histidine 5. Residues glutamate 25 and aspartate 27 each coordinate Mg(2+). The active-site Nucleophile is histidine 41. 2 disulfide bridges follow: cysteine 45-cysteine 51 and cysteine 47-cysteine 191. Aspartate 85 contributes to the Mg(2+) binding site.

This sequence belongs to the arthropod phospholipase D family. Class II subfamily. Mg(2+) is required as a cofactor. In terms of tissue distribution, expressed by the venom gland.

It localises to the secreted. The enzyme catalyses an N-(acyl)-sphingosylphosphocholine = an N-(acyl)-sphingosyl-1,3-cyclic phosphate + choline. It catalyses the reaction an N-(acyl)-sphingosylphosphoethanolamine = an N-(acyl)-sphingosyl-1,3-cyclic phosphate + ethanolamine. The catalysed reaction is a 1-acyl-sn-glycero-3-phosphocholine = a 1-acyl-sn-glycero-2,3-cyclic phosphate + choline. It carries out the reaction a 1-acyl-sn-glycero-3-phosphoethanolamine = a 1-acyl-sn-glycero-2,3-cyclic phosphate + ethanolamine. Dermonecrotic toxins cleave the phosphodiester linkage between the phosphate and headgroup of certain phospholipids (sphingolipid and lysolipid substrates), forming an alcohol (often choline) and a cyclic phosphate. This toxin acts on sphingomyelin (SM). It may also act on ceramide phosphoethanolamine (CPE), lysophosphatidylcholine (LPC) and lysophosphatidylethanolamine (LPE), but not on lysophosphatidylserine (LPS), and lysophosphatidylglycerol (LPG). It acts by transphosphatidylation, releasing exclusively cyclic phosphate products as second products. Induces dermonecrosis, hemolysis, increased vascular permeability, edema, inflammatory response, and platelet aggregation. The protein is Dermonecrotic toxin SpeSicTox-betaIB2b of Sicarius peruensis (Six-eyed sand spider).